The chain runs to 260 residues: Adenosine 5'-phosphosulfate reductase (260 aa).

Cys130, Cys131, Cys213, and Cys216 together coordinate [4Fe-4S] cluster. Cys241 serves as the catalytic Nucleophile; cysteine thiosulfonate intermediate.

Belongs to the PAPS reductase family. CysH subfamily. The cofactor is [4Fe-4S] cluster.

It is found in the cytoplasm. It carries out the reaction [thioredoxin]-disulfide + sulfite + AMP + 2 H(+) = adenosine 5'-phosphosulfate + [thioredoxin]-dithiol. It functions in the pathway sulfur metabolism; hydrogen sulfide biosynthesis; sulfite from sulfate. Functionally, catalyzes the formation of sulfite from adenosine 5'-phosphosulfate (APS) using thioredoxin as an electron donor. In Agrobacterium fabrum (strain C58 / ATCC 33970) (Agrobacterium tumefaciens (strain C58)), this protein is Adenosine 5'-phosphosulfate reductase.